The sequence spans 714 residues: MPAAAGDGLLGEPAAPGGDGGAEDTTRPAAACEGSFLPAWVSGVSRERLRDFQHHKRVGNYLIGSRKLGEGSFAKVREGLHVLTGEKVAIKVIDKKRAKKDTYVTKNLRREGQIQQMIRHPNITQLLDILETENSYYLVMELCPGGNLMHKIYEKKRLDEAEARRYIRQLISAVEHLHRAGVVHRDLKIENLLLDEDNNIKLIDFGLSNCAGILGYSDPFSTQCGSPAYAAPELLARKKYGPKIDVWSIGVNMYAMLTGTLPFTVEPFSLRALYQKMVDKAMNPLPTQLSTGAVNFLRSLLEPDPVKRPNIQQALANRWLNENYTGKVPCNVTYPNRISLEDLSPSVVLHMTEKLGYKNSDVINTVLSNRACHILAIYFLLNKKLERYLSGKSDIQDSICYKTQLYQIEKCRATKEPYEASLDTWTRDFEFHAVQDKKPKEQEKRGDFLHRPFSKKLDKNLPSHKQPSPSLITQLQSTKALLKDRKASKSGFPDKDSFVCRNLFRKTSDSNCVASSSMEFIPVPPPRTPRIVKKLEPHQPGPGSASILPKEEPLLLDMVRSFESVDREDHIELLSPSHHYRILSSPVSLARRNSSERTLSQGLLSGSTSPLQTPLHSTLVSFAHEEKNSPPKEEGVCSPPPVPSNGLLQPLGSPNCVKSRGRFPMMGIGQMLRKRHQSLQPSSERSLDASMSPLQPTAPSSLSFDMADGVKGQC.

A compositionally biased stretch (low complexity) spans 1–16 (MPAAAGDGLLGEPAAP). Residues 1–28 (MPAAAGDGLLGEPAAPGGDGGAEDTTRP) form a disordered region. Residues 62–320 (LIGSRKLGEG…IQQALANRWL (259 aa)) form the Protein kinase domain. ATP-binding positions include 68 to 76 (LGEGSFAKV) and Lys91. Asp186 functions as the Proton acceptor in the catalytic mechanism. The segment covering 624-635 (HEEKNSPPKEEG) has biased composition (basic and acidic residues). 2 disordered regions span residues 624-658 (HEEK…NCVK) and 674-714 (KRHQ…KGQC). Residues 692–703 (SPLQPTAPSSLS) are compositionally biased toward polar residues.

It belongs to the protein kinase superfamily. CAMK Ser/Thr protein kinase family. SNF1 subfamily.

It catalyses the reaction L-seryl-[protein] + ATP = O-phospho-L-seryl-[protein] + ADP + H(+). The enzyme catalyses L-threonyl-[protein] + ATP = O-phospho-L-threonyl-[protein] + ADP + H(+). The protein is Hormonally up-regulated neu tumor-associated kinase (Hunk) of Mus musculus (Mouse).